The primary structure comprises 601 residues: Glutathione-regulated potassium-efflux system protein KefB (601 aa).

13 consecutive transmembrane segments (helical) span residues 4–24 (SDFLLAGVLFLFAAVAAVPLA), 29–49 (IGAVLGYLLAGIAIGPWGLGF), 55–75 (EILHFSELGVVFLMFIIGLEL), 87–107 (IFGVGAAQVLLSAALLAGLLM), 115–135 (AAVVGGIGLAMSSTAMALQLM), 152–172 (VLLFQDLAVIPALALVPLLAG), 177–197 (HFDWMKVGMKVLAFVGMLIGG), 207–227 (FIAASGVREVFTAATLLLVLG), 230–250 (LFMDALGLSMALGTFIAGVLL), 268–288 (GLLLGLFFISVGMSLNLGVLY), 291–311 (LLWVVISVVVLVAVKILVLYL), 324–344 (MQFAGVLSQGGEFAFVLFSTA), and 356–376 (ALLLVTVTLSMMTTPLLMKLV). One can recognise an RCK N-terminal domain in the interval 400 to 519 (KPQVIVVGFG…AGVTQFSRET (120 aa)).

Belongs to the monovalent cation:proton antiporter 2 (CPA2) transporter (TC 2.A.37) family. KefB subfamily. In terms of assembly, interacts with the regulatory subunit KefG.

It is found in the cell inner membrane. Activated by adducts between glutathione and electrophiles. Pore-forming subunit of a potassium efflux system that confers protection against electrophiles. Catalyzes K(+)/H(+) antiport. In Escherichia coli (strain K12), this protein is Glutathione-regulated potassium-efflux system protein KefB.